We begin with the raw amino-acid sequence, 345 residues long: MFTSTGSSGLYKAPLSKSLLLVPSALSLLLALLLPHCQKLFVYDLHAVKNDFQIWRLICGRIICLDLKDTFCSSLLIYNFRIFERRYGSRKFASFLLGSWVLSALFDFLLVEAMQYFFGITAASNLPSGFLAPVFALFVPFYCSIPRVQVAQILGPLSITNKTLIYILGLQLFTSGSYIWIVAISGLMSGLCYNSKMFQVHQVLCIPSWMAKFFSWTLEPIFSSSEPTSEARIGMGATLDIQRQQRMELLDRQLMFSQFAQGRRQRQQQGGMINWNRLFPPLRQRQNVNYQGGRQSEPAAPPPLEVSEEQVARLMEMGFSRGDALEALRASNNDLNVATNFLLQH.

The signal sequence occupies residues 1 to 35 (MFTSTGSSGLYKAPLSKSLLLVPSALSLLLALLLP). The Extracellular portion of the chain corresponds to 36–91 (HCQKLFVYDLHAVKNDFQIWRLICGRIICLDLKDTFCSSLLIYNFRIFERRYGSRK). The chain crosses the membrane as a helical span at residues 92 to 112 (FASFLLGSWVLSALFDFLLVE). Residues 113–125 (AMQYFFGITAASN) lie on the Cytoplasmic side of the membrane. The chain crosses the membrane as a helical span at residues 126 to 146 (LPSGFLAPVFALFVPFYCSIP). Residues 147–163 (RVQVAQILGPLSITNKT) lie on the Extracellular side of the membrane. A glycan (N-linked (GlcNAc...) asparagine) is linked at Asn-161. A helical transmembrane segment spans residues 164-184 (LIYILGLQLFTSGSYIWIVAI). Residues 185–345 (SGLMSGLCYN…NVATNFLLQH (161 aa)) are Cytoplasmic-facing. Positions 305-345 (EVSEEQVARLMEMGFSRGDALEALRASNNDLNVATNFLLQH) constitute a UBA domain.

Interacts with LMBR1L, FAF2, AMFR and VCP.

It is found in the endoplasmic reticulum membrane. Its function is as follows. Restricts trafficking of FAF2 from the endoplasmic reticulum to lipid droplets. In association with LMBR1L and E3 ubiquitin-protein ligase AMFR, negatively regulates the canonical Wnt signaling pathway in the lymphocytes by promoting the ubiquitin-mediated degradation of CTNNB1 and Wnt receptors FZD6 and LRP6. This is Ubiquitin-associated domain-containing protein 2 (UBAC2) from Macaca fascicularis (Crab-eating macaque).